A 147-amino-acid polypeptide reads, in one-letter code: UPF0306 protein YhbP (147 aa).

Belongs to the UPF0306 family.

The protein is UPF0306 protein YhbP of Salmonella arizonae (strain ATCC BAA-731 / CDC346-86 / RSK2980).